The chain runs to 453 residues: Collagen alpha-4(IV) chain (453 aa).

The disordered stretch occupies residues 1-218 (GPPGPPGAPG…PPGPMGDPGP (218 aa)). Positions 1–222 (GPPGPPGAPG…MGDPGPIGFG (222 aa)) are triple-helical region. Composition is skewed to pro residues over residues 26-44 (QGPP…PGPP), 60-72 (PGPP…PGPP), and 95-122 (PQGP…PLGP). The segment covering 153 to 162 (PEGTMGLPGM) has biased composition (low complexity). The segment covering 174–183 (PGLDGRRGED) has biased composition (basic and acidic residues). Pro residues predominate over residues 206-215 (APGPPGPMGD). In terms of domain architecture, Collagen IV NC1 spans 228 to 453 (GFLLVLHSQT…SRCQVCVKHS (226 aa)). Intrachain disulfides connect cysteine 243-cysteine 332, cysteine 276-cysteine 329, cysteine 288-cysteine 294, cysteine 351-cysteine 449, cysteine 385-cysteine 446, and cysteine 397-cysteine 404.

The protein belongs to the type IV collagen family. There are six type IV collagen isoforms, alpha 1(IV)-alpha 6(IV), each of which can form a triple helix structure with 2 other chains to generate type IV collagen network. The alpha 3(IV) chain forms a triple helical protomer with alpha 4(IV) and alpha 5(IV); this triple helical structure dimerizes through NC1-NC1 domain interactions such that the alpha 3(IV), alpha 4(IV) and alpha 5(IV) chains of one protomer connect with the alpha 5(IV), alpha 4(IV) and alpha 3(IV) chains of the opposite protomer, respectively. Associates with LAMB2 at the neuromuscular junction and in GBM. In terms of processing, prolines at the third position of the tripeptide repeating unit (G-X-Y) are hydroxylated in some or all of the chains. Post-translationally, type IV collagens contain numerous cysteine residues which are involved in inter- and intramolecular disulfide bonding. 12 of these, located in the NC1 domain, are conserved in all known type IV collagens. The trimeric structure of the NC1 domains is stabilized by covalent bonds between Lys and Met residues. Alpha 3 and alpha 4 type IV collagens are colocalized and present only in basement membranes of kidney, eye, cochlea, lung and brain.

The protein localises to the secreted. Its subcellular location is the extracellular space. The protein resides in the extracellular matrix. It is found in the basement membrane. In terms of biological role, type IV collagen is the major structural component of glomerular basement membranes (GBM), forming a 'chicken-wire' meshwork together with laminins, proteoglycans and entactin/nidogen. In Bos taurus (Bovine), this protein is Collagen alpha-4(IV) chain (COL4A4).